Here is a 276-residue protein sequence, read N- to C-terminus: Protein PXR1 (276 aa).

The interval 1-23 is disordered; that stretch reads MGLAGTKIKQRFGNDPRNTNWSN. The 47-residue stretch at 25–71 folds into the G-patch domain; sequence TSRFGHQYLAKMGWQQGSGLGLVSHALTTHVKVSIKDDNLGLGAKLH. A compositionally biased stretch (basic and acidic residues) spans 152–172; the sequence is DDGKKSRKRKADESETKEDKK. The disordered stretch occupies residues 152 to 261; it reads DDGKKSRKRK…SKWIKQKRAS (110 aa). Over residues 173–218 the composition is skewed to basic residues; that stretch reads TLKKHKKEKKDKKEKKEKKKKKEKKDKKDKKDKKNKKDKKDKKDKK. Basic and acidic residues predominate over residues 219-228; that stretch reads DKKDKIRTGS. Residues 229-239 are compositionally biased toward polar residues; that stretch reads DETLVSKESSA.

The protein belongs to the PINX1 family.

The protein localises to the nucleus. It localises to the nucleolus. Functionally, involved in rRNA-processing at A0, A1 and A2 sites and negatively regulates telomerase. This chain is Protein PXR1 (PXR1), found in Candida albicans (strain SC5314 / ATCC MYA-2876) (Yeast).